The primary structure comprises 399 residues: PCI domain-containing protein 2 (399 aa).

One can recognise a PCI domain in the interval 210–391 (VTYKYYVGRK…QKLVVSKQNP (182 aa)).

Belongs to the CSN12 family.

The chain is PCI domain-containing protein 2 (pcid2) from Danio rerio (Zebrafish).